Consider the following 513-residue polypeptide: Light-independent protochlorophyllide reductase subunit B (513 aa).

D36 serves as a coordination point for [4Fe-4S] cluster. The active-site Proton donor is D274. 409–410 is a binding site for substrate; that stretch reads GL. A disordered region spans residues 426-457; that stretch reads DAAGPSHHGGHSPKPQAAEPAPQAAPQPENTG. Over residues 440–454 the composition is skewed to low complexity; the sequence is PQAAEPAPQAAPQPE.

The protein belongs to the ChlB/BchB/BchZ family. Protochlorophyllide reductase is composed of three subunits; BchL, BchN and BchB. Forms a heterotetramer of two BchB and two BchN subunits. [4Fe-4S] cluster serves as cofactor.

The catalysed reaction is chlorophyllide a + oxidized 2[4Fe-4S]-[ferredoxin] + 2 ADP + 2 phosphate = protochlorophyllide a + reduced 2[4Fe-4S]-[ferredoxin] + 2 ATP + 2 H2O. It functions in the pathway porphyrin-containing compound metabolism; bacteriochlorophyll biosynthesis (light-independent). Component of the dark-operative protochlorophyllide reductase (DPOR) that uses Mg-ATP and reduced ferredoxin to reduce ring D of protochlorophyllide (Pchlide) to form chlorophyllide a (Chlide). This reaction is light-independent. The NB-protein (BchN-BchB) is the catalytic component of the complex. The chain is Light-independent protochlorophyllide reductase subunit B from Roseobacter denitrificans (strain ATCC 33942 / OCh 114) (Erythrobacter sp. (strain OCh 114)).